The following is a 34-amino-acid chain: Antimicrobial peptide Alo-2 (34 aa).

3 disulfides stabilise this stretch: Cys-1–Cys-18, Cys-8–Cys-22, and Cys-17–Cys-33.

It is found in the secreted. Its function is as follows. Has antifungal activity against C.glabrata. The sequence is that of Antimicrobial peptide Alo-2 from Acrocinus longimanus (Giant harlequin beetle).